A 153-amino-acid chain; its full sequence is uncharacterized protein (153 aa).

Disordered regions lie at residues Gly30 to Asp66 and Ile79 to Asp153. Residues Glu45–Gln56 show a composition bias toward acidic residues. 2 stretches are compositionally biased toward polar residues: residues Gly106–Ser116 and Gly130–Leu144.

This is an uncharacterized protein from Xenopus laevis (African clawed frog).